The primary structure comprises 193 residues: AP-3 complex subunit sigma-1 (193 aa).

The residue at position 191 (serine 191) is a Phosphoserine.

The protein belongs to the adaptor complexes small subunit family. In terms of assembly, adaptor protein complex 3 (AP-3) is a heterotetramer composed of two large adaptins (delta-type subunit AP3D1 and beta-type subunit AP3B1 or AP3B2), a medium adaptin (mu-type subunit AP3M1 or AP3M2) and a small adaptin (sigma-type subunit APS1 or AP3S2). Interacts with AGAP1. AP-3 associates with the BLOC-1 complex.

The protein localises to the golgi apparatus. It localises to the cytoplasmic vesicle membrane. Its function is as follows. Part of the AP-3 complex, an adaptor-related complex which is not clathrin-associated. The complex is associated with the Golgi region as well as more peripheral structures. It facilitates the budding of vesicles from the Golgi membrane and may be directly involved in trafficking to lysosomes. In concert with the BLOC-1 complex, AP-3 is required to target cargos into vesicles assembled at cell bodies for delivery into neurites and nerve terminals. This is AP-3 complex subunit sigma-1 (AP3S1) from Bos taurus (Bovine).